The chain runs to 362 residues: MIKNRKLDITSTNVAGIGTDLDKKCRLDAASTEAQWKGVGQAPGLKIWRIENFKVVPVPESSYGKFYDGDSYIILHTFKEGNSLKHDIHFFLGTFTTQDEAGTAAYKTVELDDFLGGAPIQYRQCQSYESPSFLSLFPKYFILSGGVESGFNHVKPTEYKPRLLHISGDKNAKVAEVPLATSSLNSGDCFLLDAGLTIYQFNGSKSSPQEKNKAAEVARAIDAERKGLPKVEVFCETDSDIPAEFWKLLGGKGAIAAKHETAPTKSEKVLYKLSDASGSLKFSEVSRGKINKSSLKSEDVFIIDLGNEIYTWIGSKSSPNEKKTAFSHATQYLVNNKRCEYTPIVRVLENGTNQSFETLLSA.

A Gelsolin-like 1 repeat occupies 53–102 (FKVVPVPESSYGKFYDGDSYIILHTFKEGNSLKHDIHFFLGTFTTQDEAG). 162–170 (RLLHISGDK) lines the a 1,2-diacyl-sn-glycero-3-phospho-(1D-myo-inositol-4,5-bisphosphate) pocket. 2 Gelsolin-like repeats span residues 172–212 (AKVA…QEKN) and 280–323 (LKFS…NEKK).

Belongs to the villin/gelsolin family.

Its function is as follows. Severin blocks the ends of F-actin and causes the fragmentation and depolymerization of actin filaments in a Ca(2+) dependent manner. The polypeptide is Severin (sevA) (Dictyostelium discoideum (Social amoeba)).